Here is a 179-residue protein sequence, read N- to C-terminus: MSGNNVQEEDSTFHVSNLYSETEIKKITQDFISEKIREQNFEEIVKYSNIRIFLSLVLIVIGTYCSIFVQYKKNPVIMIQLLVAFFVVSTTLIIFEYFFFDDVFMILRSNNGSLVKLYCRLDVKKSTLILAYKLNKNVFETSFELKRLYNENGYLMKPYAKNVVMNFLSAHGRTLKLKN.

Residues 1 to 48 (MSGNNVQEEDSTFHVSNLYSETEIKKITQDFISEKIREQNFEEIVKYS) lie on the Cytoplasmic side of the membrane. A helical transmembrane segment spans residues 49 to 69 (NIRIFLSLVLIVIGTYCSIFV). The Extracellular segment spans residues 70–74 (QYKKN). A helical transmembrane segment spans residues 75–95 (PVIMIQLLVAFFVVSTTLIIF). Over 96–179 (EYFFFDDVFM…AHGRTLKLKN (84 aa)) the chain is Cytoplasmic.

Belongs to the SPCS2 family. In terms of assembly, component of the signal peptidase complex (SPC) composed of a catalytic subunit SEC11/SPC21 and three accessory subunits SPC25, SPC3/SPC22, SPC1/SPC12. The complex induces a local thinning of the ER membrane which is used to measure the length of the signal peptide (SP) h-region of protein substrates. This ensures the selectivity of the complex towards h-regions shorter than 18-20 amino acids. Within the complex, interacts with SEC11/SPC21. Component of a complex composed of SPC25 and PMV; the interaction is mediated via the transmembrane domains. The complex interacts with the SEC61 channel-forming translocon complex and is involved in the recognition and import of PEXEL motif-containing proteins into the ER for subsequent export.

It is found in the endoplasmic reticulum membrane. Functionally, component of the signal peptidase complex (SPC) which catalyzes the cleavage of N-terminal signal sequences from nascent proteins as they are translocated into the lumen of the endoplasmic reticulum. Enhances the enzymatic activity of SPC and facilitates the interactions between different components of the translocation site. Also, regulatory component of the CSP25-plasmepsin PMV complex which cleaves the pentameric localization motif RxLxE/Q/D (termed Plasmodium export element (PEXEL)) located downstream of the N-terminal secretory signal sequence of several proteins. This chain is Signal peptidase complex subunit 2, found in Plasmodium falciparum (isolate 3D7).